A 259-amino-acid polypeptide reads, in one-letter code: Probable metal transport system ATP-binding protein CPn_0348/CP_0412/CPj0348/CpB0355 (259 aa).

An ABC transporter domain is found at 3–241 (VKDETFWSVH…TIFQTYGCEI (239 aa)). Residue 41–48 (GPNGAGKS) coordinates ATP.

This sequence belongs to the ABC transporter superfamily.

The protein localises to the cell inner membrane. Part of an ATP-driven transport system CPn0346/CPn0347/CPn0348/CPn0349 for a metal. Probably responsible for energy coupling to the transport system. This Chlamydia pneumoniae (Chlamydophila pneumoniae) protein is Probable metal transport system ATP-binding protein CPn_0348/CP_0412/CPj0348/CpB0355.